Reading from the N-terminus, the 77-residue chain is Large ribosomal subunit protein uL24 (77 aa).

Belongs to the universal ribosomal protein uL24 family. As to quaternary structure, part of the 50S ribosomal subunit.

Functionally, one of two assembly initiator proteins, it binds directly to the 5'-end of the 23S rRNA, where it nucleates assembly of the 50S subunit. One of the proteins that surrounds the polypeptide exit tunnel on the outside of the subunit. In Sulfurovum sp. (strain NBC37-1), this protein is Large ribosomal subunit protein uL24.